We begin with the raw amino-acid sequence, 274 residues long: Coiled-coil domain-containing protein 28A (274 aa).

Residues 121 to 166 (VSKSTGFSNPASQSTSQRPKLKRVMKEKTKPQGGEGKGAQSTPIQH) are disordered. Positions 122–138 (SKSTGFSNPASQSTSQR) are enriched in polar residues. Residues 234–263 (KRKTASDSNLDRLLSDLEELNSSIQKLHLA) adopt a coiled-coil conformation.

The protein is Coiled-coil domain-containing protein 28A (CCDC28A) of Homo sapiens (Human).